A 308-amino-acid polypeptide reads, in one-letter code: tRNA pseudouridine synthase B (308 aa).

Aspartate 37 (nucleophile) is an active-site residue.

Belongs to the pseudouridine synthase TruB family. Type 1 subfamily.

It catalyses the reaction uridine(55) in tRNA = pseudouridine(55) in tRNA. Responsible for synthesis of pseudouridine from uracil-55 in the psi GC loop of transfer RNAs. The chain is tRNA pseudouridine synthase B from Deinococcus radiodurans (strain ATCC 13939 / DSM 20539 / JCM 16871 / CCUG 27074 / LMG 4051 / NBRC 15346 / NCIMB 9279 / VKM B-1422 / R1).